A 347-amino-acid polypeptide reads, in one-letter code: Dihydroorotate dehydrogenase (quinone) (347 aa).

FMN contacts are provided by residues 62-66 and Ala-86; that span reads AGLDK. Lys-66 contributes to the substrate binding site. 111–115 is a binding site for substrate; the sequence is NRMGF. Residues Asn-139 and Asn-172 each contribute to the FMN site. Asn-172 contacts substrate. Residue Ser-175 is the Nucleophile of the active site. A substrate-binding site is contributed by Asn-177. 2 residues coordinate FMN: Lys-217 and Thr-245. Substrate is bound at residue 246–247; it reads NT. FMN is bound by residues Gly-268, Gly-297, and 318–319; that span reads YT.

Belongs to the dihydroorotate dehydrogenase family. Type 2 subfamily. As to quaternary structure, monomer. Requires FMN as cofactor.

Its subcellular location is the cell membrane. The enzyme catalyses (S)-dihydroorotate + a quinone = orotate + a quinol. Its pathway is pyrimidine metabolism; UMP biosynthesis via de novo pathway; orotate from (S)-dihydroorotate (quinone route): step 1/1. In terms of biological role, catalyzes the conversion of dihydroorotate to orotate with quinone as electron acceptor. This Coxiella burnetii (strain CbuK_Q154) (Coxiella burnetii (strain Q154)) protein is Dihydroorotate dehydrogenase (quinone).